Consider the following 147-residue polypeptide: D-aminoacyl-tRNA deacylase (147 aa).

The short motif at 137-138 (GP) is the Gly-cisPro motif, important for rejection of L-amino acids element.

The protein belongs to the DTD family. As to quaternary structure, homodimer.

Its subcellular location is the cytoplasm. It catalyses the reaction glycyl-tRNA(Ala) + H2O = tRNA(Ala) + glycine + H(+). The enzyme catalyses a D-aminoacyl-tRNA + H2O = a tRNA + a D-alpha-amino acid + H(+). Functionally, an aminoacyl-tRNA editing enzyme that deacylates mischarged D-aminoacyl-tRNAs. Also deacylates mischarged glycyl-tRNA(Ala), protecting cells against glycine mischarging by AlaRS. Acts via tRNA-based rather than protein-based catalysis; rejects L-amino acids rather than detecting D-amino acids in the active site. By recycling D-aminoacyl-tRNA to D-amino acids and free tRNA molecules, this enzyme counteracts the toxicity associated with the formation of D-aminoacyl-tRNA entities in vivo and helps enforce protein L-homochirality. This chain is D-aminoacyl-tRNA deacylase, found in Bacillus velezensis (strain DSM 23117 / BGSC 10A6 / LMG 26770 / FZB42) (Bacillus amyloliquefaciens subsp. plantarum).